The following is an 854-amino-acid chain: Selenocysteine insertion sequence-binding protein 2 (854 aa).

4 disordered regions span residues 332 to 351 (ADPKNVSIPSSEALSSDPSY), 356 to 394 (HIIHPTQKSKASQGSDLEQNEASRKNKKKKEKSTSKYEV), 417 to 445 (ERRDRIETPKFQSKQQPQDNFKNNVKKSQ), and 488 to 619 (ECAS…PNHT). Composition is skewed to polar residues over residues 338-350 (SIPSSEALSSDPS) and 361-372 (TQKSKASQGSDL). The Nuclear localization signal motif lies at 380-387 (KNKKKKEK). A compositionally biased stretch (polar residues) spans 426 to 445 (KFQSKQQPQDNFKNNVKKSQ). Positions 536 to 547 (ILKERQERKQRL) are enriched in basic and acidic residues. Positions 548 to 559 (QENAVSPAFTSD) are enriched in polar residues. Acidic residues predominate over residues 560 to 572 (DTQDGESGGDDQF). The span at 593–611 (VEDKSEEPPGTELQRDTEA) shows a compositional bias: basic and acidic residues. An RNA-binding region spans residues 673–694 (LVLGLREVLKHLKLKKLKCVII). The disordered stretch occupies residues 787–812 (EPRPQAPPSLPTQGPSCPAEDGPPAL).

As to expression, expressed at high levels in testis.

The protein localises to the nucleus. It localises to the mitochondrion. MRNA-binding protein that binds to the SECIS (selenocysteine insertion sequence) element present in the 3'-UTR of mRNAs encoding selenoproteins and facilitates the incorporation of the rare amino acid selenocysteine. Insertion of selenocysteine at UGA codons is mediated by SECISBP2 and EEFSEC: SECISBP2 (1) specifically binds the SECIS sequence once the 80S ribosome encounters an in-frame UGA codon and (2) contacts the RPS27A/eS31 of the 40S ribosome before ribosome stalling. (3) GTP-bound EEFSEC then delivers selenocysteinyl-tRNA(Sec) to the 80S ribosome and adopts a preaccommodated state conformation. (4) After GTP hydrolysis, EEFSEC dissociates from the assembly, selenocysteinyl-tRNA(Sec) accommodates, and peptide bond synthesis and selenoprotein elongation occur. This Homo sapiens (Human) protein is Selenocysteine insertion sequence-binding protein 2.